The sequence spans 665 residues: Protein-arginine deiminase type-2 (665 aa).

18 residues coordinate Ca(2+): D123, D125, D127, V129, E131, N154, D156, E158, D166, D169, K171, D177, D180, E354, D389, F408, L411, and E412. Catalysis depends on C647, which acts as the Nucleophile.

It belongs to the protein arginine deiminase family. In terms of assembly, homodimer. The cofactor is Ca(2+). In terms of tissue distribution, detected in keratinocytes in epidermis (at protein level).

The protein localises to the cytoplasm. The enzyme catalyses L-arginyl-[protein] + H2O = L-citrullyl-[protein] + NH4(+). In terms of biological role, catalyzes the deimination of arginine residues of proteins. This is Protein-arginine deiminase type-2 (PADI2) from Homo sapiens (Human).